The primary structure comprises 320 residues: SUMO-activating enzyme subunit 1B-1 (320 aa).

M1 is modified (N-acetylmethionine).

It belongs to the ubiquitin-activating E1 family. As to quaternary structure, heterodimer of SAE1A or SAE1B and SAE2. The complex binds SUMO proteins via SAE2.

It localises to the nucleus. Its pathway is protein modification; protein sumoylation. The dimeric enzyme acts as an E1 ligase for SUMO1 and SUMO2. It mediates ATP-dependent activation of SUMO proteins and formation of a thioester with a conserved cysteine residue on SAE2. Functionally redundant with its paralog SAE1A. This is SUMO-activating enzyme subunit 1B-1 (SAE1B-1) from Arabidopsis thaliana (Mouse-ear cress).